Reading from the N-terminus, the 187-residue chain is Elongation factor P (187 aa).

It belongs to the elongation factor P family.

The protein localises to the cytoplasm. It functions in the pathway protein biosynthesis; polypeptide chain elongation. Its function is as follows. Involved in peptide bond synthesis. Stimulates efficient translation and peptide-bond synthesis on native or reconstituted 70S ribosomes in vitro. Probably functions indirectly by altering the affinity of the ribosome for aminoacyl-tRNA, thus increasing their reactivity as acceptors for peptidyl transferase. This chain is Elongation factor P, found in Mycobacterium ulcerans (strain Agy99).